The sequence spans 377 residues: Succinyl-diaminopimelate desuccinylase (377 aa).

Zn(2+) is bound at residue histidine 66. Aspartate 68 is a catalytic residue. Aspartate 99 provides a ligand contact to Zn(2+). Glutamate 133 acts as the Proton acceptor in catalysis. 3 residues coordinate Zn(2+): glutamate 134, glutamate 162, and histidine 348.

Belongs to the peptidase M20A family. DapE subfamily. Homodimer. Requires Zn(2+) as cofactor. Co(2+) is required as a cofactor.

It carries out the reaction N-succinyl-(2S,6S)-2,6-diaminopimelate + H2O = (2S,6S)-2,6-diaminopimelate + succinate. It functions in the pathway amino-acid biosynthesis; L-lysine biosynthesis via DAP pathway; LL-2,6-diaminopimelate from (S)-tetrahydrodipicolinate (succinylase route): step 3/3. Catalyzes the hydrolysis of N-succinyl-L,L-diaminopimelic acid (SDAP), forming succinate and LL-2,6-diaminopimelate (DAP), an intermediate involved in the bacterial biosynthesis of lysine and meso-diaminopimelic acid, an essential component of bacterial cell walls. The protein is Succinyl-diaminopimelate desuccinylase of Xylella fastidiosa (strain M12).